Here is a 125-residue protein sequence, read N- to C-terminus: Ribosome-binding factor A (125 aa).

Belongs to the RbfA family. In terms of assembly, monomer. Binds 30S ribosomal subunits, but not 50S ribosomal subunits or 70S ribosomes.

It is found in the cytoplasm. Its function is as follows. One of several proteins that assist in the late maturation steps of the functional core of the 30S ribosomal subunit. Associates with free 30S ribosomal subunits (but not with 30S subunits that are part of 70S ribosomes or polysomes). Required for efficient processing of 16S rRNA. May interact with the 5'-terminal helix region of 16S rRNA. This chain is Ribosome-binding factor A, found in Akkermansia muciniphila (strain ATCC BAA-835 / DSM 22959 / JCM 33894 / BCRC 81048 / CCUG 64013 / CIP 107961 / Muc).